The primary structure comprises 302 residues: Geranylgeranyl diphosphate synthase (302 aa).

Residues Lys53, Arg56, and His87 each coordinate isopentenyl diphosphate. The Mg(2+) site is built by Asp94 and Asp100. Arg105 is a binding site for (2E,6E)-farnesyl diphosphate. Isopentenyl diphosphate is bound at residue Arg106. (2E,6E)-farnesyl diphosphate is bound by residues Lys189, Thr190, and Gln227.

It belongs to the FPP/GGPP synthase family. The cofactor is Mg(2+).

The enzyme catalyses isopentenyl diphosphate + (2E,6E)-farnesyl diphosphate = (2E,6E,10E)-geranylgeranyl diphosphate + diphosphate. The protein operates within isoprenoid biosynthesis; geranylgeranyl diphosphate biosynthesis; geranylgeranyl diphosphate from farnesyl diphosphate and isopentenyl diphosphate: step 1/1. In terms of biological role, catalyzes the condensation of farnesyl diphosphate (FPP) and isopentenyl diphosphate (IPP) to yield geranylgeranyl diphosphate (GGPP) needed for biosynthesis of carotenoids and diterpenes. The polypeptide is Geranylgeranyl diphosphate synthase (crtE) (Pantoea ananas (Erwinia uredovora)).